We begin with the raw amino-acid sequence, 158 residues long: Cyclic pyranopterin monophosphate synthase (158 aa).

Substrate-binding positions include 75–77 (LCH) and 113–114 (ME). The active site involves Asp-128.

The protein belongs to the MoaC family. In terms of assembly, homohexamer; trimer of dimers.

It catalyses the reaction (8S)-3',8-cyclo-7,8-dihydroguanosine 5'-triphosphate = cyclic pyranopterin phosphate + diphosphate. Its pathway is cofactor biosynthesis; molybdopterin biosynthesis. In terms of biological role, catalyzes the conversion of (8S)-3',8-cyclo-7,8-dihydroguanosine 5'-triphosphate to cyclic pyranopterin monophosphate (cPMP). The chain is Cyclic pyranopterin monophosphate synthase from Pasteurella multocida (strain Pm70).